Reading from the N-terminus, the 416-residue chain is Hepatic and glial cell adhesion molecule (416 aa).

An N-terminal signal peptide occupies residues 1–33; it reads MKRERGALSRASRALRLAPFVYLLLIQTDPLEG. An Ig-like V-type domain is found at 34–142; that stretch reads VNITSPVRLI…GEKTINLTVD (109 aa). Residues 34–240 are Extracellular-facing; the sequence is VNITSPVRLI…VKITVYRRSS (207 aa). N-linked (GlcNAc...) asparagine glycosylation is found at N35, N138, N167, and N189. The Ig-like C2-type domain maps to 148–234; it reads PQVLVASTTV…QGRSLPVKIT (87 aa). The cysteines at positions 168 and 217 are disulfide-linked. A helical membrane pass occupies residues 241-261; the sequence is LYIILSTGGIFLLVTLVTVCA. The Cytoplasmic segment spans residues 262 to 416; it reads CWKPSKRKQK…DEAGPVEISA (155 aa). The tract at residues 273–416 is disordered; sequence LEKQNSLEYM…DEAGPVEISA (144 aa). Phosphoserine is present on S278. Over residues 285 to 306 the composition is skewed to basic and acidic residues; the sequence is NDDRLKPEADTLPRSGEQERKN. 2 positions are modified to phosphoserine: S350 and S377. Residues 383–398 show a composition bias toward low complexity; it reads SSPGRSRSASRTLRTA.

As to quaternary structure, homodimer. Dimer formation occurs predominantly through cis interactions on the cell surface. Part of a complex containing MLC1, TRPV4, AQP4 and ATP1B1. Interacts with CLCN2. Post-translationally, N-glycosylated.

It localises to the cytoplasm. The protein localises to the cell membrane. In terms of biological role, involved in regulating cell motility and cell-matrix interactions. May inhibit cell growth through suppression of cell proliferation. In glia, associates and targets CLCN2 at astrocytic processes and myelinated fiber tracts where it may regulate transcellular chloride flux involved in neuron excitability. The chain is Hepatic and glial cell adhesion molecule from Homo sapiens (Human).